Consider the following 219-residue polypeptide: Poxin (219 aa).

Catalysis depends on histidine 17, which acts as the Proton donor. The Shared with catalytic histidine of dimeric partner role is filled by tyrosine 138. Lysine 142 acts as the Proton acceptor; shared with catalytic histidine of dimeric partner in catalysis.

Belongs to the poxin family. As to quaternary structure, homodimer.

It carries out the reaction 2',3'-cGAMP + H2O = Gp(2'-5')Ap(3') + H(+). Functionally, nuclease that is responsible for viral evasion of host cGAS-STING innate immunity. Cleaves 2',3'-cGAMP which is produced by host cGAS following recognition of cytosolic DNA and blocks the subsequent 2',3'-cGAMP-mediated activation of TMEM173/STING, which normally spreads to adjacent cells and activates the interferon and NF-kappa-B immune responses. The sequence is that of Poxin (OPG188) from Bos taurus (Bovine).